Reading from the N-terminus, the 152-residue chain is Regulatory protein RecX (152 aa).

Belongs to the RecX family.

The protein localises to the cytoplasm. Modulates RecA activity. In Haemophilus influenzae (strain PittEE), this protein is Regulatory protein RecX.